The primary structure comprises 165 residues: Destrin (165 aa).

The residue at position 2 (Ala-2) is an N-acetylalanine. Ser-3 is modified (phosphoserine). Positions 4–153 (GVQVADEVCR…NRTCIAEKLG (150 aa)) constitute an ADF-H domain. Lys-19 is modified (N6-acetyllysine). The short motif at 30 to 34 (KKRKK) is the Nuclear localization signal element.

This sequence belongs to the actin-binding proteins ADF family. In terms of processing, ISGylated. In terms of tissue distribution, widely expressed. Not found in skeletal muscle.

In terms of biological role, actin-depolymerizing protein. Severs actin filaments (F-actin) and binds to actin monomers (G-actin). Acts in a pH-independent manner. In Mus musculus (Mouse), this protein is Destrin (Dstn).